A 700-amino-acid polypeptide reads, in one-letter code: Methionine--tRNA ligase (700 aa).

The 'HIGH' region signature appears at 14–24; the sequence is PYANGPVHLGH. 4 residues coordinate Zn(2+): Cys146, Cys149, Cys159, and Cys162. Residues 344–348 carry the 'KMSKS' region motif; it reads KFSKS. Lys347 lines the ATP pocket. The tRNA-binding domain maps to 599–700; that stretch reads DFLKVDLRVA…GEEINGRQIQ (102 aa).

This sequence belongs to the class-I aminoacyl-tRNA synthetase family. MetG type 1 subfamily. In terms of assembly, homodimer. The cofactor is Zn(2+).

Its subcellular location is the cytoplasm. The enzyme catalyses tRNA(Met) + L-methionine + ATP = L-methionyl-tRNA(Met) + AMP + diphosphate. In terms of biological role, is required not only for elongation of protein synthesis but also for the initiation of all mRNA translation through initiator tRNA(fMet) aminoacylation. This chain is Methionine--tRNA ligase, found in Pelodictyon phaeoclathratiforme (strain DSM 5477 / BU-1).